The following is a 208-amino-acid chain: MSGRFITLEGGEGAGKSSNLVWLAEALRAEGKTVMVSREPGGTALAESIREVLLAPSNEVMADDTELLLVFAARAQHLEQKIRPALARGEWVLCDRFLDATWAYQGAGRGLDSAAIAALEALVIRDTRPDMTILFDVPVEVGMARAGKRAALDRIEQEDRAFFDRIRQCYLARAAQEPNRFRTVDASQPLESVQQQLARIVEEMQAWP.

Glycine 10–serine 17 provides a ligand contact to ATP.

Belongs to the thymidylate kinase family.

It carries out the reaction dTMP + ATP = dTDP + ADP. Functionally, phosphorylation of dTMP to form dTDP in both de novo and salvage pathways of dTTP synthesis. This Alcanivorax borkumensis (strain ATCC 700651 / DSM 11573 / NCIMB 13689 / SK2) protein is Thymidylate kinase.